A 151-amino-acid chain; its full sequence is MLP-like protein 329 (151 aa).

It belongs to the MLP family.

This chain is MLP-like protein 329 (MLP329), found in Arabidopsis thaliana (Mouse-ear cress).